The sequence spans 126 residues: Protein ApaG (126 aa).

The ApaG domain maps to 2-126; the sequence is SDPRYQIDVS…FRLAVPGALH (125 aa).

This chain is Protein ApaG, found in Azotobacter vinelandii (strain DJ / ATCC BAA-1303).